The following is a 725-amino-acid chain: Manganese-exporting P-type ATPase (725 aa).

The 68-residue stretch at 25 to 92 folds into the HMA domain; the sequence is GRMRIQIEWV…AISGAAHVAA (68 aa). The next 6 membrane-spanning stretches (helical) occupy residues 101–119, 142–160, 165–179, 188–202, 335–359, and 365–383; these read HSSD…GAAA, LVAS…RGAL, TGTD…IASL, LAVL…YLQD, VGEN…AITK, and MTVL…TPTA. Asp416 acts as the 4-aspartylphosphate intermediate in catalysis. Residues Asp416, Thr418, and Asp618 each coordinate Mg(2+). 2 consecutive transmembrane segments (helical) span residues 669-688 and 698-717; these read AVEV…AAGL and PVLA…ANSS.

It belongs to the cation transport ATPase (P-type) (TC 3.A.3) family. Type IB subfamily.

The protein localises to the cell membrane. It carries out the reaction Mn(2+)(in) + ATP + H2O = Mn(2+)(out) + ADP + phosphate + H(+). In terms of biological role, high affinity, slow turnover Mn(2+) transporting ATPase. In Mycobacterium leprae (strain TN), this protein is Manganese-exporting P-type ATPase (ctpC).